The primary structure comprises 382 residues: Protein phosphatase 1A (382 aa).

Gly2 carries N-myristoyl glycine lipidation. The 269-residue stretch at 23–291 (RYGLSSMQGW…DNMSVILICF (269 aa)) folds into the PPM-type phosphatase domain. 4 residues coordinate Mn(2+): Asp60, Gly61, Asp239, and Asp282. Phosphoserine occurs at positions 375 and 377.

The protein belongs to the PP2C family. In terms of assembly, monomer. Interacts with SMAD2; the interaction dephosphorylates SMAD2 in its C-terminal SXS motif resulting in disruption of the SMAD2/SMAD4 complex, SMAD2 nuclear export and termination of the TGF-beta-mediated signaling. Interacts with SMAD2; the interaction dephosphorylates SMAD2 in its C-terminal SXS motif resulting in disruption of the SMAD2/SMAD4 complex, SMAD2 nuclear export and termination of the TGF-beta-mediated signaling. Interacts with the phosphorylated form of IKBKB/IKKB. It depends on Mg(2+) as a cofactor. Requires Mn(2+) as cofactor. Post-translationally, N-myristoylation is essential for the recognition of its substrates for dephosphorylation.

The protein resides in the nucleus. It localises to the cytoplasm. Its subcellular location is the cytosol. It is found in the membrane. The enzyme catalyses O-phospho-L-seryl-[protein] + H2O = L-seryl-[protein] + phosphate. It catalyses the reaction O-phospho-L-threonyl-[protein] + H2O = L-threonyl-[protein] + phosphate. In terms of biological role, enzyme with a broad specificity. Negatively regulates TGF-beta signaling through dephosphorylating SMAD2 and SMAD3, resulting in their dissociation from SMAD4, nuclear export of the SMADs and termination of the TGF-beta-mediated signaling. Dephosphorylates PRKAA1 and PRKAA2. Plays an important role in the termination of TNF-alpha-mediated NF-kappa-B activation through dephosphorylating and inactivating IKBKB/IKKB. The protein is Protein phosphatase 1A (PPM1A) of Oryctolagus cuniculus (Rabbit).